A 608-amino-acid chain; its full sequence is Lysophospholipase 2 (608 aa).

Positions 1 to 17 (MLVWQSILLFLVGCVLS) are cleaved as a signal peptide. Residues 30 to 564 (QCPEGKLTRS…ENYCWDGTIY (535 aa)) form the PLA2c domain. N-linked (GlcNAc...) asparagine glycans are attached at residues Asn259, Asn365, Asn450, Asn464, Asn491, and Asn572.

This sequence belongs to the lysophospholipase family.

The protein resides in the secreted. The enzyme catalyses a 1-acyl-sn-glycero-3-phosphocholine + H2O = sn-glycerol 3-phosphocholine + a fatty acid + H(+). Catalyzes the release of fatty acids from lysophospholipids. Phospholipase B may well contribute to pathogenicity by abetting the fungus in damaging and traversing host cell membranes, processes which likely increase the rapidity of disseminated infection. The protein is Lysophospholipase 2 (PLB2) of Candida albicans (Yeast).